A 214-amino-acid polypeptide reads, in one-letter code: Pyridoxine/pyridoxamine 5'-phosphate oxidase (214 aa).

Residues 9-12 (RLDY) and lysine 67 contribute to the substrate site. Residues 62–67 (RMVLLK), 77–78 (FT), lysine 84, and glutamine 106 contribute to the FMN site. The substrate site is built by tyrosine 124, arginine 128, and serine 132. FMN-binding positions include 141-142 (QS) and tryptophan 186. Position 192-194 (192-194 (RLH)) interacts with substrate. Residue arginine 196 participates in FMN binding.

The protein belongs to the pyridoxamine 5'-phosphate oxidase family. As to quaternary structure, homodimer. The cofactor is FMN.

The enzyme catalyses pyridoxamine 5'-phosphate + O2 + H2O = pyridoxal 5'-phosphate + H2O2 + NH4(+). The catalysed reaction is pyridoxine 5'-phosphate + O2 = pyridoxal 5'-phosphate + H2O2. It functions in the pathway cofactor metabolism; pyridoxal 5'-phosphate salvage; pyridoxal 5'-phosphate from pyridoxamine 5'-phosphate: step 1/1. The protein operates within cofactor metabolism; pyridoxal 5'-phosphate salvage; pyridoxal 5'-phosphate from pyridoxine 5'-phosphate: step 1/1. Catalyzes the oxidation of either pyridoxine 5'-phosphate (PNP) or pyridoxamine 5'-phosphate (PMP) into pyridoxal 5'-phosphate (PLP). The protein is Pyridoxine/pyridoxamine 5'-phosphate oxidase of Microcystis aeruginosa (strain NIES-843 / IAM M-2473).